We begin with the raw amino-acid sequence, 309 residues long: Foldase protein PrsA (309 aa).

An N-terminal signal peptide occupies residues 1 to 22 (MKTRSKLAAGFLTLMSVATLAA). Cys23 carries the N-palmitoyl cysteine lipid modification. Cys23 is lipidated: S-diacylglycerol cysteine. Residues 146-241 (TPETSVQVIK…TSYYIIKVTD (96 aa)) enclose the PpiC domain.

Belongs to the PrsA family.

The protein localises to the cell membrane. It carries out the reaction [protein]-peptidylproline (omega=180) = [protein]-peptidylproline (omega=0). Its function is as follows. Plays a major role in protein secretion by helping the post-translocational extracellular folding of several secreted proteins. This Streptococcus agalactiae serotype Ia (strain ATCC 27591 / A909 / CDC SS700) protein is Foldase protein PrsA.